We begin with the raw amino-acid sequence, 99 residues long: MSQDFVTLVSKDDKEYEISRSAAMISPTLKAMIEGPFRESKGRIELKQFDSHILEKAVEYLNYNLKYSGVSEDDDEIPEFEIPTEMSLELLLAADYLSI.

N-acetylserine is present on Ser-2. The residue at position 2 (Ser-2) is a Phosphoserine.

The protein belongs to the SKP1 family. Heterodimer with ELA1. Component of a CRL3 E3 ubiquitin ligase complex consisting of the cullin CUL3, the linker protein ELC1, the substrate receptor ELA1, and the RING protein HRT1. Interacts with CIN5. Interacts with PCL6. Interacts with SNF4. Interacts with the large RNA polymerase II subunit RPO21 in a manner dependent on DEF1. Interacts with DEF1. Interacts with RAD7. Interacts with RAD16.

Its subcellular location is the cytoplasm. The protein localises to the nucleus. As part of the CRL3 E3 ubiquitin ligase complex; polyubiquitylates monoubiquitylated RNA polymerase II subunit RPO21 to trigger its proteolysis; plays a role in global genomic repair. Prevents degradation of interacting proteins like PCL6 by the proteasome. The protein is Elongin-C (ELC1) of Saccharomyces cerevisiae (strain ATCC 204508 / S288c) (Baker's yeast).